The chain runs to 107 residues: Nucleoid-associated protein YaaK (107 aa).

The tract at residues 1 to 24 is disordered; sequence MRGGMGNMQKMMKQMQKMQKDMAK. Positions 8-17 are enriched in low complexity; that stretch reads MQKMMKQMQK.

Belongs to the YbaB/EbfC family. In terms of assembly, homodimer.

It is found in the cytoplasm. The protein resides in the nucleoid. Binds to DNA and alters its conformation. May be involved in regulation of gene expression, nucleoid organization and DNA protection. In Bacillus subtilis (strain 168), this protein is Nucleoid-associated protein YaaK (yaaK).